The primary structure comprises 143 residues: Ribosome-binding factor A (143 aa).

The segment at 123–143 is disordered; the sequence is DKSLQENYKQNDKETKAEKLR.

The protein belongs to the RbfA family. In terms of assembly, monomer. Binds 30S ribosomal subunits, but not 50S ribosomal subunits or 70S ribosomes.

Its subcellular location is the cytoplasm. In terms of biological role, one of several proteins that assist in the late maturation steps of the functional core of the 30S ribosomal subunit. Associates with free 30S ribosomal subunits (but not with 30S subunits that are part of 70S ribosomes or polysomes). Required for efficient processing of 16S rRNA. May interact with the 5'-terminal helix region of 16S rRNA. This is Ribosome-binding factor A from Francisella tularensis subsp. mediasiatica (strain FSC147).